The chain runs to 243 residues: 1-(5-phosphoribosyl)-5-[(5-phosphoribosylamino)methylideneamino] imidazole-4-carboxamide isomerase (243 aa).

Asp-10 functions as the Proton acceptor in the catalytic mechanism. The Proton donor role is filled by Asp-129.

This sequence belongs to the HisA/HisF family.

Its subcellular location is the cytoplasm. The enzyme catalyses 1-(5-phospho-beta-D-ribosyl)-5-[(5-phospho-beta-D-ribosylamino)methylideneamino]imidazole-4-carboxamide = 5-[(5-phospho-1-deoxy-D-ribulos-1-ylimino)methylamino]-1-(5-phospho-beta-D-ribosyl)imidazole-4-carboxamide. It functions in the pathway amino-acid biosynthesis; L-histidine biosynthesis; L-histidine from 5-phospho-alpha-D-ribose 1-diphosphate: step 4/9. This chain is 1-(5-phosphoribosyl)-5-[(5-phosphoribosylamino)methylideneamino] imidazole-4-carboxamide isomerase, found in Saccharopolyspora erythraea (strain ATCC 11635 / DSM 40517 / JCM 4748 / NBRC 13426 / NCIMB 8594 / NRRL 2338).